The primary structure comprises 89 residues: Small ribosomal subunit protein uS14A (89 aa).

The protein belongs to the universal ribosomal protein uS14 family. Part of the 30S ribosomal subunit. Contacts proteins S3 and S10.

Its function is as follows. Binds 16S rRNA, required for the assembly of 30S particles and may also be responsible for determining the conformation of the 16S rRNA at the A site. This is Small ribosomal subunit protein uS14A from Listeria monocytogenes serotype 4b (strain F2365).